The following is a 224-amino-acid chain: Voltage-dependent calcium channel gamma-1 subunit (224 aa).

The Cytoplasmic segment spans residues 1–10 (MSQTKALKVR). The chain crosses the membrane as a helical span at residues 11 to 29 (VTLFCILVGIVLALVAVVT). Topologically, residues 30 to 110 (DHWAVLSPHV…TQKEYSISAA (81 aa)) are extracellular. N-linked (GlcNAc...) asparagine glycans are attached at residues asparagine 43 and asparagine 81. An intrachain disulfide couples cysteine 57 to cysteine 82. The helical transmembrane segment at 111–131 (AIAIFSLGFIILGTICGLLSF) threads the bilayer. At 132 to 136 (RKKRD) the chain is on the cytoplasmic side. The helical transmembrane segment at 137–157 (YLLRPASMFYAFAGLCIFVSV) threads the bilayer. The Extracellular portion of the chain corresponds to 158–181 (EVMRQSVKRMIDSEDTVWIDYYYG). The chain crosses the membrane as a helical span at residues 182 to 206 (WSFACACAAFILLFLGGIALLLFSL). At 207-224 (PRMPQYPWESCMDAEPEH) the chain is on the cytoplasmic side.

Belongs to the PMP-22/EMP/MP20 family. CACNG subfamily. Component of a calcium channel complex consisting of a pore-forming alpha subunit (CACNA1S) and the ancillary subunits CACNB1 or CACNB2, CACNG1 and CACNA2D1. The channel complex contains alpha, beta, gamma and delta subunits in a 1:1:1:1 ratio, i.e. it contains either CACNB1 or CACNB2. In terms of processing, N-glycosylated.

The protein resides in the cell membrane. Its subcellular location is the sarcolemma. Regulatory subunit of the voltage-gated calcium channel that gives rise to L-type calcium currents in skeletal muscle. Regulates channel inactivation kinetics. The protein is Voltage-dependent calcium channel gamma-1 subunit (CACNG1) of Sus scrofa (Pig).